The following is an 888-amino-acid chain: Endochitinase A1 (888 aa).

The signal sequence occupies residues 1-22; that stretch reads MVSSKLSFVATAVAALAPLASA. Positions 29–338 constitute a GH18 domain; it reads SNLAIYWGQG…DHMKDILLHC (310 aa). Glutamate 174 functions as the Proton donor in the catalytic mechanism. Disordered regions lie at residues 338–631, 743–799, and 813–855; these read CDPS…TTTA, PVTE…VSTS, and PLIL…YTQE. Low complexity predominate over residues 344–617; the sequence is VTSSSAIPSS…STDESSTTVG (274 aa). Asparagine 622 carries an N-linked (GlcNAc...) asparagine glycan. Residues 764-775 are compositionally biased toward polar residues; the sequence is EGSNPTQPSGAS. N-linked (GlcNAc...) asparagine glycosylation occurs at asparagine 780. The span at 835–855 shows a compositional bias: polar residues; it reads PSGQNSGSSSHVPIPPSYTQE. Glycine 863 carries GPI-anchor amidated glycine lipidation. Residues 864-888 constitute a propeptide, removed in mature form; it reads AASRVTGLGHGLVLTVLTLSAFFVL.

This sequence belongs to the glycosyl hydrolase 18 family. Chitinase class III subfamily.

The protein localises to the cell membrane. The protein resides in the secreted. Its subcellular location is the cell wall. The enzyme catalyses Random endo-hydrolysis of N-acetyl-beta-D-glucosaminide (1-&gt;4)-beta-linkages in chitin and chitodextrins.. With respect to regulation, the cyclic peptide natural product argifin acts as a specific inhibitor. GPI-anchored chitinase involved in the degradation of chitin, a component of the cell walls of fungi and exoskeletal elements of some animals (including worms and arthropods). Required to reshape the cell wall at the sites where cell wall remodeling and/or cell wall maturation actively take place such as sites of conidia formation. This chain is Endochitinase A1 (chiA1), found in Aspergillus fumigatus (strain ATCC MYA-4609 / CBS 101355 / FGSC A1100 / Af293) (Neosartorya fumigata).